A 341-amino-acid polypeptide reads, in one-letter code: Tetraacyldisaccharide 4'-kinase (341 aa).

ATP is bound at residue 54 to 61 (TVGGAGKT).

It belongs to the LpxK family.

It catalyses the reaction a lipid A disaccharide + ATP = a lipid IVA + ADP + H(+). It functions in the pathway glycolipid biosynthesis; lipid IV(A) biosynthesis; lipid IV(A) from (3R)-3-hydroxytetradecanoyl-[acyl-carrier-protein] and UDP-N-acetyl-alpha-D-glucosamine: step 6/6. In terms of biological role, transfers the gamma-phosphate of ATP to the 4'-position of a tetraacyldisaccharide 1-phosphate intermediate (termed DS-1-P) to form tetraacyldisaccharide 1,4'-bis-phosphate (lipid IVA). The sequence is that of Tetraacyldisaccharide 4'-kinase from Brucella ovis (strain ATCC 25840 / 63/290 / NCTC 10512).